A 148-amino-acid chain; its full sequence is Large-conductance mechanosensitive channel (148 aa).

2 helical membrane-spanning segments follow: residues 9–29 (AFAV…GAAF) and 79–99 (IQTV…VKAI).

Belongs to the MscL family. In terms of assembly, homopentamer.

It localises to the cell inner membrane. In terms of biological role, channel that opens in response to stretch forces in the membrane lipid bilayer. May participate in the regulation of osmotic pressure changes within the cell. In Pseudomonas savastanoi pv. phaseolicola (strain 1448A / Race 6) (Pseudomonas syringae pv. phaseolicola (strain 1448A / Race 6)), this protein is Large-conductance mechanosensitive channel.